A 219-amino-acid polypeptide reads, in one-letter code: Small ribosomal subunit protein uS19 (219 aa).

The tract at residues 1 to 128 (MGFKGAWNKR…YEEIYAQYKQ (128 aa)) is unknown. Residues 129–219 (MTEKKAYVDP…DKTAKVVKKK (91 aa)) are small ribosomal subunit protein uS19.

Belongs to the universal ribosomal protein uS19 family.

Functionally, protein S19 forms a complex with S13 that binds strongly to the 16S ribosomal RNA. In Aquifex pyrophilus, this protein is Small ribosomal subunit protein uS19.